The sequence spans 239 residues: UPF0173 metal-dependent hydrolase Msm_0779 (239 aa).

Belongs to the UPF0173 family.

In Methanobrevibacter smithii (strain ATCC 35061 / DSM 861 / OCM 144 / PS), this protein is UPF0173 metal-dependent hydrolase Msm_0779.